Here is a 517-residue protein sequence, read N- to C-terminus: Lysophosphatidylcholine acyltransferase 1 (517 aa).

Residues 1–52 (MRFPNRKLHTAVNGGDSGVSTHFRNPFVHELRFTTLQKLKIAVMTVTLFPVR) are Cytoplasmic-facing. The chain crosses the membrane as a helical; Signal-anchor for type II membrane protein span at residues 53 to 73 (LLFAAFMMLLAWPFAFVATVG). Topologically, residues 74-517 (RSENAVEPLS…SPRNHSKKQD (444 aa)) are lumenal. The short motif at 129–134 (HSSYFD) is the HXXXXD motif element. Residue Asn-207 is glycosylated (N-linked (GlcNAc...) asparagine). Residues 443–478 (VGDLAVSELFRAIDSQDKGKITFDELCSFMEKCPDL) enclose the EF-hand domain. Residue Asn-511 is glycosylated (N-linked (GlcNAc...) asparagine). The Di-lysine motif motif lies at 514–517 (KKQD).

Belongs to the 1-acyl-sn-glycerol-3-phosphate acyltransferase family.

It localises to the endoplasmic reticulum membrane. Its subcellular location is the golgi apparatus membrane. It is found in the cell membrane. The protein resides in the lipid droplet. The enzyme catalyses a 1-acyl-sn-glycero-3-phosphocholine + an acyl-CoA = a 1,2-diacyl-sn-glycero-3-phosphocholine + CoA. It catalyses the reaction a 1-O-alkyl-sn-glycero-3-phosphocholine + acetyl-CoA = a 1-O-alkyl-2-acetyl-sn-glycero-3-phosphocholine + CoA. The catalysed reaction is a 1-acyl-sn-glycero-3-phosphate + an acyl-CoA = a 1,2-diacyl-sn-glycero-3-phosphate + CoA. It carries out the reaction a 1-O-(1Z-alkenyl)-sn-glycero-3-phosphocholine + an acyl-CoA = a 1-O-(1Z-alkenyl)-2-acyl-sn-glycero-3-phosphocholine + CoA. The enzyme catalyses 1-acyl-sn-glycero-3-phospho-(1'-sn-glycerol) + an acyl-CoA = a 1,2-diacyl-sn-glycero-3-phospho-(1'-sn-glycerol) + CoA. It catalyses the reaction 1-hexadecanoyl-sn-glycero-3-phosphocholine + hexadecanoyl-CoA = 1,2-dihexadecanoyl-sn-glycero-3-phosphocholine + CoA. The catalysed reaction is 1-O-hexadecyl-sn-glycero-3-phosphocholine + hexadecanoyl-CoA = 1-O-hexadecyl-2-hexadecanoyl-sn-glycero-3-phosphocholine + CoA. It carries out the reaction a 1-O-(1Z-alkenyl)-sn-glycero-3-phosphocholine + hexadecanoyl-CoA = 1-O-(1Z)-alkenyl-2-hexadecanoyl-sn-glycero-3-phosphocholine + CoA. The enzyme catalyses 1-hexadecanoyl-sn-glycero-3-phospho-(1'-sn-glycerol) + hexadecanoyl-CoA = 1,2-dihexadecanoyl-sn-glycero-3-phospho-(1'-sn-glycerol) + CoA. It catalyses the reaction 1-dodecanoyl-sn-glycero-3-phosphocholine + hexadecanoyl-CoA = 1-dodecanoyl-2-hexadecanoyl-sn-glycero-3-phosphocholine + CoA. The catalysed reaction is 1-tetradecanoyl-sn-glycero-3-phosphocholine + hexadecanoyl-CoA = 1-tetradecanoyl-2-hexadecanoyl-sn-glycero-3-phosphocholine + CoA. It carries out the reaction 1-O-octadecyl-sn-glycero-3-phosphocholine + hexadecanoyl-CoA = 1-O-octadecyl-2-hexadecanoyl-sn-glycero-3-phosphocholine + CoA. The enzyme catalyses 1-octadecanoyl-sn-glycero-3-phosphocholine + hexadecanoyl-CoA = 1-octadecanoyl-2-hexadecanoyl-sn-glycero-3-phosphocholine + CoA. It catalyses the reaction 1-(9Z-octadecenoyl)-sn-glycero-3-phosphocholine + hexadecanoyl-CoA = 1-(9Z-octadecenoyl)-2-hexadecanoyl-sn-glycero-3-phosphocholine + CoA. The catalysed reaction is 1-eicosanoyl-sn-glycero-3-phosphocholine + hexadecanoyl-CoA = 1-eicosanoyl-2-hexadecanoyl-sn-glycero-3-phosphocholine + CoA. It carries out the reaction hexanoyl-CoA + 1-hexadecanoyl-sn-glycero-3-phosphocholine = 1-hexadecanoyl-2-hexanoyl-sn-glycero-3-phosphocholine + CoA. The enzyme catalyses octanoyl-CoA + 1-hexadecanoyl-sn-glycero-3-phosphocholine = 1-hexadecanoyl-2-octanoyl-sn-glycero-3-phosphocholine + CoA. It catalyses the reaction decanoyl-CoA + 1-hexadecanoyl-sn-glycero-3-phosphocholine = 1-hexadecanoyl-2-decanoyl-sn-glycero-3-phosphocholine + CoA. The catalysed reaction is dodecanoyl-CoA + 1-hexadecanoyl-sn-glycero-3-phosphocholine = 1-hexadecanoyl-2-dodecanoyl-sn-glycero-3-phosphocholine + CoA. It carries out the reaction tetradecanoyl-CoA + 1-hexadecanoyl-sn-glycero-3-phosphocholine = 1-hexadecanoyl-2-tetradecanoyl-sn-glycero-3-phosphocholine + CoA. The enzyme catalyses 1-hexadecanoyl-sn-glycero-3-phosphocholine + (9Z)-octadecenoyl-CoA = 1-hexadecanoyl-2-(9Z-octadecenoyl)-sn-glycero-3-phosphocholine + CoA. It catalyses the reaction (9Z,12Z)-octadecadienoyl-CoA + 1-hexadecanoyl-sn-glycero-3-phosphocholine = 1-hexadecanoyl-2-(9Z,12Z-octadecadienoyl)-sn-glycero-3-phosphocholine + CoA. The catalysed reaction is (4Z,7Z,10Z,13Z,16Z,19Z)-docosahexaenoyl-CoA + 1-hexadecanoyl-sn-glycero-3-phosphocholine = 1-hexadecanoyl-2-(4Z,7Z,10Z,13Z,16Z,19Z-docosahexaenoyl)-sn-glycero-3-phosphocholine + CoA. It carries out the reaction 1-hexadecanoyl-sn-glycero-3-phosphocholine + acetyl-CoA = 1-hexadecanoyl-2-acetyl-sn-glycero-3-phosphocholine + CoA. The enzyme catalyses eicosanoyl-CoA + 1-hexadecanoyl-sn-glycero-3-phosphocholine = 1-hexadecanoyl-2-eicosanoyl-sn-glycero-3-phosphocholine + CoA. It catalyses the reaction 1-O-hexadecyl-sn-glycero-3-phosphocholine + acetyl-CoA = 1-O-hexadecyl-2-acetyl-sn-glycero-3-phosphocholine + CoA. The catalysed reaction is a 1-acyl-sn-glycero-3-phosphocholine + hexadecanoyl-CoA = 1-acyl-2-hexadecanoyl-sn-glycero-3-phosphocholine + CoA. It carries out the reaction a 1-acyl-sn-glycero-3-phosphate + hexadecanoyl-CoA = 1-acyl-2-hexadecanoyl-sn-glycero-3-phosphate + CoA. The enzyme catalyses 1-acyl-sn-glycero-3-phospho-(1'-sn-glycerol) + hexadecanoyl-CoA = 1-acyl-2-hexadecanoyl-sn-glycero-3-phospho-(1'-sn-glycerol) + CoA. It participates in lipid metabolism; phospholipid metabolism. In terms of biological role, exhibits both acyltransferase and acetyltransferase activities. Activity is calcium-independent. Catalyzes the conversion of lysophosphatidylcholine (1-acyl-sn-glycero-3-phosphocholine or LPC) into phosphatidylcholine (1,2-diacyl-sn-glycero-3-phosphocholine or PC). Catalyzes the conversion 1-acyl-sn-glycerol-3-phosphate (lysophosphatidic acid or LPA) into 1,2-diacyl-sn-glycerol-3-phosphate (phosphatidic acid or PA) by incorporating an acyl moiety at the sn-2 position of the glycerol backbone. The polypeptide is Lysophosphatidylcholine acyltransferase 1 (lpcat1) (Danio rerio (Zebrafish)).